A 236-amino-acid chain; its full sequence is Phosphoribosylformylglycinamidine synthase subunit PurQ (236 aa).

The 232-residue stretch at 3 to 234 (FGVIVFPGSN…VDWWERGERL (232 aa)) folds into the Glutamine amidotransferase type-1 domain. C86 acts as the Nucleophile in catalysis. Catalysis depends on residues H203 and E205.

As to quaternary structure, part of the FGAM synthase complex composed of 1 PurL, 1 PurQ and 2 PurS subunits.

The protein resides in the cytoplasm. The enzyme catalyses N(2)-formyl-N(1)-(5-phospho-beta-D-ribosyl)glycinamide + L-glutamine + ATP + H2O = 2-formamido-N(1)-(5-O-phospho-beta-D-ribosyl)acetamidine + L-glutamate + ADP + phosphate + H(+). It carries out the reaction L-glutamine + H2O = L-glutamate + NH4(+). Its pathway is purine metabolism; IMP biosynthesis via de novo pathway; 5-amino-1-(5-phospho-D-ribosyl)imidazole from N(2)-formyl-N(1)-(5-phospho-D-ribosyl)glycinamide: step 1/2. Its function is as follows. Part of the phosphoribosylformylglycinamidine synthase complex involved in the purines biosynthetic pathway. Catalyzes the ATP-dependent conversion of formylglycinamide ribonucleotide (FGAR) and glutamine to yield formylglycinamidine ribonucleotide (FGAM) and glutamate. The FGAM synthase complex is composed of three subunits. PurQ produces an ammonia molecule by converting glutamine to glutamate. PurL transfers the ammonia molecule to FGAR to form FGAM in an ATP-dependent manner. PurS interacts with PurQ and PurL and is thought to assist in the transfer of the ammonia molecule from PurQ to PurL. The sequence is that of Phosphoribosylformylglycinamidine synthase subunit PurQ from Moorella thermoacetica (strain ATCC 39073 / JCM 9320).